Consider the following 240-residue polypeptide: Adiponectin (240 aa).

The N-terminal stretch at 1–17 is a signal peptide; the sequence is MLLQGALLLLLALPSHG. Residue lysine 28 is modified to 5-hydroxylysine. An O-linked (Gal...) hydroxylysine glycan is attached at lysine 28. Positions 29 to 100 are disordered; that stretch reads GACAGWMAGI…GTPGRKGEPG (72 aa). Cysteine 31 bears the S-(2-succinyl)cysteine mark. 3 positions are modified to 4-hydroxyproline: proline 39, proline 42, and proline 48. In terms of domain architecture, Collagen-like spans 43–102; it reads GHNGTPGRDGRDGTPGEKGEKGDPGLVGPKGDTGETGITGIEGPRGFPGTPGRKGEPGES. Residues 50–65 are compositionally biased toward basic and acidic residues; sequence RDGRDGTPGEKGEKGD. Residues lysine 60, lysine 63, and lysine 72 each carry the 5-hydroxylysine modification. Lysine 60, lysine 63, and lysine 72 each carry an O-linked (Gal...) hydroxylysine glycan. Proline 86 is subject to 4-hydroxyproline. 5-hydroxylysine is present on lysine 96. The O-linked (Gal...) hydroxylysine glycan is linked to lysine 96. The C1q domain maps to 103-240; sequence AYVYRSAFSV…GFLLYHNIVE (138 aa).

Homomultimer. Forms trimers, hexamers and 12- to 18-mers. The trimers (low molecular weight complexes / LMW) are assembled via non-covalent interactions of the collagen-like domains in a triple helix and hydrophobic interactions within the globular C1q domain. Several trimers can associate to form disulfide-linked hexamers (middle molecular weight complexes / MMW) and larger complexes (higher molecular weight / HMW). The HMW-complex assembly is also modulated by the degree of lysine hydroxylation and glycosylation. LMW, MMW and HMW complexes bind to HBEGF, MMW and HMW complexes bind to PDGFB, and HMW complex binds to FGF2. Interacts with CTRP9 via the C1q domain (heterotrimeric complex). In terms of processing, HMW complexes are more extensively glycosylated than smaller oligomers. Hydroxylation and glycosylation of the lysine residues within the collagen-like domain of adiponectin seem to be critically involved in regulating the formation and/or secretion of HMW complexes and consequently contribute to the insulin-sensitizing activity of adiponectin in hepatocytes. Post-translationally, O-glycosylated. O-linked glycans on hydroxylysine residues consist of Glc-Gal disaccharides bound to the oxygen atom of post-translationally added hydroxyl groups. O-linked glycosylations elsewhere disialylated with the structure Neu5Acalpha2-&gt;8Neu5Acalpha2-&gt;3Gal. Sialylated by alpha 2,8-sialyltransferase III. Desialylated forms are rapidly cleared from the circulation. Not N-glycosylated. Succination of Cys-31 by the Krebs cycle intermediate fumarate, which leads to S-(2-succinyl)cysteine residues, inhibits polymerization and secretion of adiponectin. Adiponectin is a major target for succination in both adipocytes and adipose tissue of diabetic mammals. It was proposed that succination of proteins is a biomarker of mitochondrial stress and accumulation of Krebs cycle intermediates in adipose tissue in diabetes and that succination of adiponectin may contribute to the decrease in plasma adiponectin in diabetes.

Its subcellular location is the secreted. With respect to regulation, polymerization and secretion of adiponectin is inhibited by succination of cysteine residues by the Krebs cycle intermediate fumarate, which leads to S-(2-succinyl)cysteine residues. Important adipokine involved in the control of fat metabolism and insulin sensitivity, with direct anti-diabetic, anti-atherogenic and anti-inflammatory activities. Stimulates AMPK phosphorylation and activation in the liver and the skeletal muscle, enhancing glucose utilization and fatty-acid combustion. Antagonizes TNF-alpha by negatively regulating its expression in various tissues such as liver and macrophages, and also by counteracting its effects. Inhibits endothelial NF-kappa-B signaling through a cAMP-dependent pathway. May play a role in cell growth, angiogenesis and tissue remodeling by binding and sequestering various growth factors with distinct binding affinities, depending on the type of complex, LMW, MMW or HMW. This is Adiponectin (ADIPOQ) from Bos taurus (Bovine).